The chain runs to 689 residues: Glycine--tRNA ligase beta subunit (689 aa).

This sequence belongs to the class-II aminoacyl-tRNA synthetase family. In terms of assembly, tetramer of two alpha and two beta subunits.

It localises to the cytoplasm. It carries out the reaction tRNA(Gly) + glycine + ATP = glycyl-tRNA(Gly) + AMP + diphosphate. The sequence is that of Glycine--tRNA ligase beta subunit from Salmonella dublin (strain CT_02021853).